The primary structure comprises 81 residues: MATSKSGGSSKNGRDSISKRLGVKRSGGQFVKAGEIIVRQRGTKFHKGKNVGLGRDYTIFALSSGKVEFKTLKGRKYVSIV.

The span at 1 to 11 shows a compositional bias: polar residues; the sequence is MATSKSGGSSK. Positions 1–20 are disordered; the sequence is MATSKSGGSSKNGRDSISKR.

The protein belongs to the bacterial ribosomal protein bL27 family.

The protein is Large ribosomal subunit protein bL27 of Borreliella afzelii (strain PKo) (Borrelia afzelii).